The primary structure comprises 186 residues: Peptidyl-tRNA hydrolase (186 aa).

Tyr-14 serves as a coordination point for tRNA. The active-site Proton acceptor is the His-19. TRNA-binding residues include Phe-64, Asn-66, and Asn-112.

This sequence belongs to the PTH family. Monomer.

It localises to the cytoplasm. The enzyme catalyses an N-acyl-L-alpha-aminoacyl-tRNA + H2O = an N-acyl-L-amino acid + a tRNA + H(+). Hydrolyzes ribosome-free peptidyl-tRNAs (with 1 or more amino acids incorporated), which drop off the ribosome during protein synthesis, or as a result of ribosome stalling. In terms of biological role, catalyzes the release of premature peptidyl moieties from peptidyl-tRNA molecules trapped in stalled 50S ribosomal subunits, and thus maintains levels of free tRNAs and 50S ribosomes. The protein is Peptidyl-tRNA hydrolase of Listeria monocytogenes serotype 4a (strain HCC23).